The sequence spans 281 residues: Ribosomal RNA large subunit methyltransferase J (281 aa).

S-adenosyl-L-methionine is bound by residues H19, H42, S101, E119, 144–145 (NG), and D165. The active-site Proton acceptor is the D165.

This sequence belongs to the RlmJ family. Monomer.

It catalyses the reaction adenosine(2030) in 23S rRNA + S-adenosyl-L-methionine = N(6)-methyladenosine(2030) in 23S rRNA + S-adenosyl-L-homocysteine + H(+). Its function is as follows. Specifically methylates the adenine in position 2030 of 23S rRNA. The polypeptide is Ribosomal RNA large subunit methyltransferase J (Haemophilus influenzae (strain ATCC 51907 / DSM 11121 / KW20 / Rd)).